The primary structure comprises 37 residues: Large ribosomal subunit protein bL36c (37 aa).

The protein belongs to the bacterial ribosomal protein bL36 family.

Its subcellular location is the plastid. The protein localises to the chloroplast. The chain is Large ribosomal subunit protein bL36c from Cryptomeria japonica (Japanese cedar).